The sequence spans 546 residues: Probable protein kinase UbiB (546 aa).

The 379-residue stretch at 124-502 (DFEIKPLASA…HVRQGQSRYF (379 aa)) folds into the Protein kinase domain. Residues 130-138 (LASASIAQV) and K153 contribute to the ATP site. D288 acts as the Proton acceptor in catalysis. Transmembrane regions (helical) follow at residues 501 to 521 (YFLGIGATLVLSGTFLLVSRP) and 522 to 542 (EWGLMPGWLMAGGLIAWFVGW).

Belongs to the ABC1 family. UbiB subfamily.

It localises to the cell inner membrane. It participates in cofactor biosynthesis; ubiquinone biosynthesis [regulation]. In terms of biological role, is probably a protein kinase regulator of UbiI activity which is involved in aerobic coenzyme Q (ubiquinone) biosynthesis. In Escherichia coli O127:H6 (strain E2348/69 / EPEC), this protein is Probable protein kinase UbiB.